Here is a 946-residue protein sequence, read N- to C-terminus: Protein TMA108 (946 aa).

An N-acetylserine modification is found at Ser2. 293 to 297 (MAMEN) contributes to the substrate binding site. Position 330 (His330) interacts with Zn(2+). Glu331 acts as the Proton acceptor in catalysis. Zn(2+) contacts are provided by His334 and Glu353.

This sequence belongs to the peptidase M1 family. Associates with ribosomal complexes. The cofactor is Zn(2+).

The protein resides in the cytoplasm. Functionally, putative zinc aminopeptidase which may be involved in ribosome biogenesis. The chain is Protein TMA108 (TMA108) from Saccharomyces cerevisiae (strain ATCC 204508 / S288c) (Baker's yeast).